The sequence spans 557 residues: D-arabinono-1,4-lactone oxidase (557 aa).

The region spanning 26–209 (FFCKPQAIFQ…THVTLRTIPK (184 aa)) is the FAD-binding PCMH-type domain. His63 is modified (pros-8alpha-FAD histidine).

The protein belongs to the oxygen-dependent FAD-linked oxidoreductase family. It depends on FAD as a cofactor.

It localises to the mitochondrion membrane. It catalyses the reaction D-arabinono-1,4-lactone + O2 = dehydro-D-arabinono-1,4-lactone + H2O2 + H(+). The protein operates within cofactor biosynthesis; D-erythroascorbate biosynthesis; dehydro-D-arabinono-1,4-lactone from D-arabinose: step 2/2. This chain is D-arabinono-1,4-lactone oxidase (ALO1), found in Debaryomyces hansenii (strain ATCC 36239 / CBS 767 / BCRC 21394 / JCM 1990 / NBRC 0083 / IGC 2968) (Yeast).